Consider the following 124-residue polypeptide: Small ribosomal subunit protein bS6 (124 aa).

The segment at 99–124 (PLPAPRIVPGSEPEPVEQQEAAAVEA) is disordered. Positions 114-124 (VEQQEAAAVEA) are enriched in low complexity.

It belongs to the bacterial ribosomal protein bS6 family.

Functionally, binds together with bS18 to 16S ribosomal RNA. The polypeptide is Small ribosomal subunit protein bS6 (Prochlorococcus marinus (strain MIT 9303)).